The following is a 450-amino-acid chain: Keratin, type I cytoskeletal 25 (450 aa).

Over residues 1–11 (MSLRLSSASRR) the composition is skewed to low complexity. The disordered stretch occupies residues 1 to 20 (MSLRLSSASRRSCPRPTTGS). A head region spans residues 1–78 (MSLRLSSASR…VNERGLLSGN (78 aa)). Positions 79–114 (EKVTMQNLNDRLASYLDSVHALEEANADLEQKIKGW) are coil 1A. The IF rod domain occupies 79–394 (EKVTMQNLND…LLIGGDDGAC (316 aa)). A linker 1 region spans residues 115-136 (YEKFGPGSCRGLDHDYSRYFPI). The coil 1B stretch occupies residues 137–228 (IDDLKNQIIA…KNHKEEMQVL (92 aa)). The segment at 229 to 251 (QCAAGGNVNVEMNAAPGVDLTVL) is linker 12. Positions 252 to 390 (LNNMRAEYEA…ETYCLLIGGD (139 aa)) are coil 2. Residues 391–450 (DGACKSGGYKSKDYGSGNVGSQVKDPAKAIVVKKVLEEVDQRSKILTTRLHSLEEKSQSN) form a tail region. Ser-442 is subject to Phosphoserine.

Belongs to the intermediate filament family. Heterodimer of a type I and a type II keratin. Heterodimer with type II keratin KRT5 leading to the formation of keratin intermediate filament (KIF) network. Interacts with KRT6A to form filaments. In terms of tissue distribution, strongly expressed in skin and scalp, and weak expression observed in thymus and tongue. In the hair follicle, expressed in Henle layer, Huxley layer and in the inner root sheath cuticle of the hair follicle. Expression extends from the bulb region up to the point of differentiation into the three layers. Also present in the medulla of beard hair (at protein level).

The protein localises to the cytoplasm. Its function is as follows. Essential for the proper assembly of type I and type II keratin protein complexes and formation of keratin intermediate filaments in the inner root sheath (irs). Plays a role in the cytoskeleton organization. The sequence is that of Keratin, type I cytoskeletal 25 from Homo sapiens (Human).